A 395-amino-acid polypeptide reads, in one-letter code: Xylose isomerase (395 aa).

Residues His54 and Glu57 contribute to the active site. The tract at residues 80–108 (AVPAGAGRDRHEGADGDDEPVHAPGCSRD) is disordered. Mg(2+) is bound by residues Glu189, Glu225, His228, Asp253, Asp263, Asp265, and Asp295.

Belongs to the xylose isomerase family. In terms of assembly, homotetramer. The cofactor is Mg(2+).

The protein resides in the cytoplasm. The catalysed reaction is alpha-D-xylose = alpha-D-xylulofuranose. This chain is Xylose isomerase, found in Streptomyces lividans.